The chain runs to 357 residues: MLPNQERKLRVLVVDDSSFMRMVIRSVLEKDPAIEVIAVAMDGVEGVEKALALRPDLITMDIEMPRLDGISALKEIMAKAPTRVLMVSTLTCEGAKATFDALDAGAIDYIPKNVTDSIDAQKAFKEELLRKVKGSGISILGRPLVSPSPRLVVPPRPVIIPRPAGQRYQYVGIGASTGGPVAVQEVLGRIPGNFPHGIVVAIHMPKAFTGPYAERLNTKCSLQVKEAKAGDIVQPGVVLVTPGGMHTALVRQGSTVAIRTIATAEYPQYIYIPSVDHMLTTFADACNGSLLGVILTGMGADGFKGMKHLKTKGGGTIVQDEATSTIYGMPRACIEGGVADTVLPLTQIGTEITKIAG.

Residues 10-127 (RVLVVDDSSF…IDAQKAFKEE (118 aa)) form the Response regulatory domain. At Asp-61 the chain carries 4-aspartylphosphate. The CheB-type methylesterase domain maps to 161 to 357 (PRPAGQRYQY…IGTEITKIAG (197 aa)). Catalysis depends on residues Ser-176, His-203, and Asp-301.

This sequence belongs to the CheB family. Post-translationally, phosphorylated by CheA. Phosphorylation of the N-terminal regulatory domain activates the methylesterase activity.

The protein resides in the cytoplasm. It carries out the reaction [protein]-L-glutamate 5-O-methyl ester + H2O = L-glutamyl-[protein] + methanol + H(+). It catalyses the reaction L-glutaminyl-[protein] + H2O = L-glutamyl-[protein] + NH4(+). Functionally, involved in chemotaxis. Part of a chemotaxis signal transduction system that modulates chemotaxis in response to various stimuli. Catalyzes the demethylation of specific methylglutamate residues introduced into the chemoreceptors (methyl-accepting chemotaxis proteins or MCP) by CheR. Also mediates the irreversible deamidation of specific glutamine residues to glutamic acid. The protein is Protein-glutamate methylesterase/protein-glutamine glutaminase 5 of Geobacter metallireducens (strain ATCC 53774 / DSM 7210 / GS-15).